We begin with the raw amino-acid sequence, 100 residues long: MATIVDPRDIILAPVISEKSYALLDDNVYIFVVHPDSNKTQIKIAIEKIFAVKVASVNTANRQGKRKRTRTGYGKRKSTKRAIVTLAPGSKPIDLFGAPA.

It belongs to the universal ribosomal protein uL23 family. Part of the 50S ribosomal subunit. Contacts protein L29, and trigger factor when it is bound to the ribosome.

In terms of biological role, one of the early assembly proteins it binds 23S rRNA. One of the proteins that surrounds the polypeptide exit tunnel on the outside of the ribosome. Forms the main docking site for trigger factor binding to the ribosome. The chain is Large ribosomal subunit protein uL23 from Mycobacterium ulcerans (strain Agy99).